A 337-amino-acid polypeptide reads, in one-letter code: MAAPESLRPRLCRLVRGEQGYGFHLHGEKGRRGQFIRRVEPGSPAEAAALRAGDRLVEVNGVNVEGETHHQVVQRIKAVEGQTQLLVVDKETDEELCRRQLTCTEEMAHRGLPPAHNPWEPKPDWACSGSLGSDTGQKDVNGPPRELRPRLCHLRRGPQGYGFNLHSDKSRPGQYIRSVDPGSPASHSGLRAQDRLIEVNGQNVEGLRHAEVVARIKAQEDEARLLVVDPETDEHFKRLRVVPTEEHVEGPLPSPVTNGTSPAQLNGGSVCSSRSDLPGSEKDNEDGSTWKRDPFQESGLHLSPTAAEAKEKARATRVNKRAPQMDWNRKREIFSNF.

The PDZ 1 domain maps to 11-91 (LCRLVRGEQG…QTQLLVVDKE (81 aa)). Positions 112-145 (LPPAHNPWEPKPDWACSGSLGSDTGQKDVNGPPR) are disordered. Phosphoserine is present on residues Ser130, Ser183, Ser186, Ser254, Ser269, Ser280, and Ser303. Positions 151-231 (LCHLRRGPQG…EARLLVVDPE (81 aa)) constitute a PDZ 2 domain. The disordered stretch occupies residues 242-337 (VPTEEHVEGP…NRKREIFSNF (96 aa)). Residues 255–275 (PVTNGTSPAQLNGGSVCSSRS) show a composition bias toward polar residues. Over residues 327–337 (WNRKREIFSNF) the composition is skewed to basic and acidic residues.

Homodimer, and heterodimer with NHERF1. Binds PDZK1. Interacts with SRY. Binds ADRB2, SLC9A3, P2RY1, P2YR2, RDX and LPAR2. Interacts with MCC. Found in a complex with EZR, PODXL and NHERF2. Interacts (via the PDZ domains) with PODXL (via the C-terminal PDZ-binding motif DTHL); interaction is detected in glomerular epithelium cells. Interacts with SGK1 and KCNJ1/ROMK1. Interacts (via the PDZ domains) with SLC26A6.

It is found in the endomembrane system. The protein localises to the nucleus. It localises to the apical cell membrane. In terms of biological role, scaffold protein that connects plasma membrane proteins with members of the ezrin/moesin/radixin family and thereby helps to link them to the actin cytoskeleton and to regulate their surface expression. Necessary for cAMP-mediated phosphorylation and inhibition of SLC9A3. May also act as scaffold protein in the nucleus. The sequence is that of Na(+)/H(+) exchange regulatory cofactor NHE-RF2 (Nherf2) from Mus musculus (Mouse).